The following is a 128-amino-acid chain: MTLEEIVSAIEQLTVAELAELVKMLEDKFGVSASAPVMAMPMAGAAAGGAAAAEEKTEFDVVLKSFGAKKIEVIKVIREITGLGLKEAKDLVEKAGTPDAVVKQGAAKEEAEEIKKKLEAAGAEVELK.

The protein belongs to the bacterial ribosomal protein bL12 family. Homodimer. Part of the ribosomal stalk of the 50S ribosomal subunit. Forms a multimeric L10(L12)X complex, where L10 forms an elongated spine to which 2 to 4 L12 dimers bind in a sequential fashion. Binds GTP-bound translation factors.

Forms part of the ribosomal stalk which helps the ribosome interact with GTP-bound translation factors. Is thus essential for accurate translation. The protein is Large ribosomal subunit protein bL12 of Thermosipho africanus (strain TCF52B).